The sequence spans 187 residues: MTVPSALVPILLLGTAAVMVQCLPLSFQRNDTVERRWETLFSRSMGEKKDTSRDSDYLLGIKRQRRLYCNVGIGFHIQVLPDGRINGMHSENRYSLLELSPVEVGVVSLYGVKSGMFVAMNAKGKLYGSRYFNEECKFKETLLPNNYNAYESRKYPGMYIALGKNGRTKKGNRVSPTMTLTHFLPRI.

A signal peptide spans 1–22 (MTVPSALVPILLLGTAAVMVQC).

Belongs to the heparin-binding growth factors family.

The protein localises to the secreted. Its function is as follows. Plays an important role in the regulation of embryonic development, cell proliferation, and cell differentiation. Good candidate for an inducing factor with possible roles both in mesoderm induction at the blastula stage and in the formation of the anteroposterior axis at the gastrula stage. This is Fibroblast growth factor 4A (fgf4-a) from Xenopus laevis (African clawed frog).